A 150-amino-acid polypeptide reads, in one-letter code: Endoribonuclease YbeY (150 aa).

Zn(2+) contacts are provided by His-112, His-116, and Asp-122.

It belongs to the endoribonuclease YbeY family. It depends on Zn(2+) as a cofactor.

It localises to the cytoplasm. Functionally, single strand-specific metallo-endoribonuclease involved in late-stage 70S ribosome quality control and in maturation of the 3' terminus of the 16S rRNA. This Protochlamydia amoebophila (strain UWE25) protein is Endoribonuclease YbeY.